Consider the following 395-residue polypeptide: Octopamine receptor beta-2R (395 aa).

The Extracellular segment spans residues 1–42; it reads MDPINGSHSGANATISDITNGAYNATDAGEWTSSVMFKLRTC. N-linked (GlcNAc...) asparagine glycosylation is found at Asn5, Asn12, and Asn24. Residues 43–63 traverse the membrane as a helical segment; sequence VLLLIVIMAVLGNMLVIVSVM. At 64-74 the chain is on the cytoplasmic side; the sequence is RHRKLRVITNY. The chain crosses the membrane as a helical span at residues 75–95; sequence FVVSLAFADILVAMVVMPFNF. Over 96–117 the chain is Extracellular; that stretch reads SVQFNQGWVFGETICDLWNSSD. Asn114 carries N-linked (GlcNAc...) asparagine glycosylation. A helical membrane pass occupies residues 118 to 140; that stretch reads VYFTSTSILHLCCISVDRYYAIV. Residues 141–154 lie on the Cytoplasmic side of the membrane; sequence KPLKYPIKMTKKMA. A helical transmembrane segment spans residues 155-175; sequence FVMLAATWLSPITISYVPIFM. Over 176-202 the chain is Extracellular; the sequence is GWYTTTDFLESRRDDQCEFKVNKPYAV. The helical transmembrane segment at 203–223 threads the bilayer; the sequence is ISSSISFWIPCTIMIFTYLAI. Residues 224-282 are Cytoplasmic-facing; sequence FKEANRQEKALHARAGNAMLMHRHSREVSDKNGALHINATTPTKDRNLLKMKREHKAAR. The chain crosses the membrane as a helical span at residues 283-303; sequence TLGIIMGAFILCWLPFFLYYV. The Extracellular segment spans residues 304–315; that stretch reads STSLCDSCNCPE. A helical transmembrane segment spans residues 316–336; the sequence is VVTVIMFWTGYFNSALNPIIY. The Cytoplasmic portion of the chain corresponds to 337-395; that stretch reads AYFNRDFRNAFKNTLACAFCSFCKRSASDLDAMERLDRRGSAQLRVPIPSRRASDLASL.

Belongs to the G-protein coupled receptor 1 family.

It is found in the cell membrane. Functionally, autoreceptor for octopamine, which is a neurotransmitter, neurohormone, and neuromodulator in invertebrates. Also acts as a receptor for tyramine, but with much less potency. The activity of this receptor is mediated by G proteins which activate adenylyl cyclase. The sequence is that of Octopamine receptor beta-2R from Chilo suppressalis (Asiatic rice borer moth).